A 405-amino-acid polypeptide reads, in one-letter code: Serine/threonine-protein kinase 2 (405 aa).

In terms of domain architecture, Protein kinase spans 54–405; it reads NDDFYHISTG…IFSDWINGGN (352 aa). Residues 60 to 68 and lysine 84 each bind ATP; that span reads ISTGGYGIV. The active-site Proton acceptor is the aspartate 274.

Belongs to the protein kinase superfamily. Ser/Thr protein kinase family. Poxviruses subfamily. Post-translationally, phosphorylated in vivo. Autophosphorylated in vitro.

The protein resides in the host endoplasmic reticulum. Its subcellular location is the host endoplasmic reticulum-Golgi intermediate compartment. It catalyses the reaction L-seryl-[protein] + ATP = O-phospho-L-seryl-[protein] + ADP + H(+). The catalysed reaction is L-threonyl-[protein] + ATP = O-phospho-L-threonyl-[protein] + ADP + H(+). Functionally, essential serine-protein kinase involved in the early stage of virion morphogenesis. The chain is Serine/threonine-protein kinase 2 (OPG054) from Vaccinia virus (strain L-IVP) (VACV).